We begin with the raw amino-acid sequence, 337 residues long: Bifunctional methylenetetrahydrofolate dehydrogenase/cyclohydrolase, mitochondrial (337 aa).

Residues Met-1 to Ala-30 constitute a mitochondrion transit peptide. Substrate is bound by residues Tyr-79–Lys-83 and Val-126–Leu-128. NAD(+) is bound by residues Gly-195 to Ser-197 and Arg-228. Residue Pro-304 to Gly-308 coordinates substrate.

Belongs to the tetrahydrofolate dehydrogenase/cyclohydrolase family. It depends on Mg(2+) as a cofactor.

Its subcellular location is the mitochondrion. The catalysed reaction is (6R)-5,10-methylene-5,6,7,8-tetrahydrofolate + NAD(+) = (6R)-5,10-methenyltetrahydrofolate + NADH. It catalyses the reaction (6R)-5,10-methenyltetrahydrofolate + H2O = (6R)-10-formyltetrahydrofolate + H(+). Its function is as follows. Although its dehydrogenase activity is NAD-specific, it can also utilize NADP at a reduced efficiency. The sequence is that of Bifunctional methylenetetrahydrofolate dehydrogenase/cyclohydrolase, mitochondrial (MTHFD2) from Gallus gallus (Chicken).